Here is a 160-residue protein sequence, read N- to C-terminus: Cytochrome b6-f complex subunit 4 (160 aa).

3 helical membrane-spanning segments follow: residues 36–56 (LLYI…GLAV), 95–115 (LLGV…PFLE), and 131–151 (TVFL…TLPI).

This sequence belongs to the cytochrome b family. PetD subfamily. In terms of assembly, the 4 large subunits of the cytochrome b6-f complex are cytochrome b6, subunit IV (17 kDa polypeptide, petD), cytochrome f and the Rieske protein, while the 4 small subunits are petG, petL, petM and petN. The complex functions as a dimer.

The protein resides in the plastid. The protein localises to the chloroplast thylakoid membrane. Component of the cytochrome b6-f complex, which mediates electron transfer between photosystem II (PSII) and photosystem I (PSI), cyclic electron flow around PSI, and state transitions. The polypeptide is Cytochrome b6-f complex subunit 4 (Solanum tuberosum (Potato)).